Here is a 535-residue protein sequence, read N- to C-terminus: Ribonuclease Y (535 aa).

A helical membrane pass occupies residues 4 to 24 (IILLIVSALIGLILGYALISI). The tract at residues 118–141 (ENLSSKEKVLDSKEQSLTDKSKHI) is disordered. The 61-residue stretch at 225–285 (TITSVHLPDD…IRREIARMTL (61 aa)) folds into the KH domain. The 94-residue stretch at 351–444 (VLRHSVEVGK…VAAADALSSA (94 aa)) folds into the HD domain.

It belongs to the RNase Y family.

The protein localises to the cell membrane. In terms of biological role, endoribonuclease that initiates mRNA decay. The polypeptide is Ribonuclease Y (Streptococcus pyogenes serotype M2 (strain MGAS10270)).